Reading from the N-terminus, the 89-residue chain is Small ribosomal subunit protein uS15 (89 aa).

Belongs to the universal ribosomal protein uS15 family. As to quaternary structure, part of the 30S ribosomal subunit. Forms a bridge to the 50S subunit in the 70S ribosome, contacting the 23S rRNA.

Functionally, one of the primary rRNA binding proteins, it binds directly to 16S rRNA where it helps nucleate assembly of the platform of the 30S subunit by binding and bridging several RNA helices of the 16S rRNA. Forms an intersubunit bridge (bridge B4) with the 23S rRNA of the 50S subunit in the ribosome. In Pectobacterium atrosepticum (strain SCRI 1043 / ATCC BAA-672) (Erwinia carotovora subsp. atroseptica), this protein is Small ribosomal subunit protein uS15.